A 206-amino-acid polypeptide reads, in one-letter code: Endoribonuclease YbeY (206 aa).

The segment at 1 to 20 (MSQANHNDTHNNIDDNINNH) is disordered. Positions 168, 172, and 178 each coordinate Zn(2+).

It belongs to the endoribonuclease YbeY family. Requires Zn(2+) as cofactor.

The protein resides in the cytoplasm. In terms of biological role, single strand-specific metallo-endoribonuclease involved in late-stage 70S ribosome quality control and in maturation of the 3' terminus of the 16S rRNA. The sequence is that of Endoribonuclease YbeY from Psychrobacter arcticus (strain DSM 17307 / VKM B-2377 / 273-4).